The chain runs to 1628 residues: Centrosomal protein of 170 kDa protein B (1628 aa).

One can recognise an FHA domain in the interval 23-73 (IFVGREDCELMLQSRSVDKQHAVINYDSDKDEHRVKDLGSLNGTFVNDVRI). 12 disordered regions span residues 136–201 (EHGA…DMTQ), 329–369 (LIRR…SEDP), 415–504 (PRKK…GKNY), 566–586 (SDVRTGKVKNEEEDNLSDAGT), 637–659 (LASEPSVPHKPIMSSTPPVKLSN), 719–739 (EHQGEADPTVPSRTRRLLPQL), 758–842 (ESQR…KKST), 1005–1084 (VSLV…LDFT), 1100–1341 (TVSS…EDEQ), 1379–1405 (AGDGDSQSSSGTGQSTSISSVPNTPAS), 1443–1463 (GSTGLEDFDQNMNDSREDPSK), and 1560–1628 (HLDV…TYIV). Composition is skewed to basic and acidic residues over residues 147-156 (KQDKADKKAT) and 180-201 (KLDKEGRRQDEHYSERPNDMTQ). Residues 421–434 (QSFTHNANSPQNDT) are compositionally biased toward polar residues. A compositionally biased stretch (basic and acidic residues) spans 436–453 (PVLKAKAEKRKGTLHVEK). Positions 454 to 479 (VSTNGMGSTAPASKSLSSPSFPQRSN) are enriched in polar residues. Over residues 481–490 (FRREKTEDRI) the composition is skewed to basic and acidic residues. 2 stretches are compositionally biased toward basic and acidic residues: residues 758-773 (ESQRKSLEEPEKRISE) and 817-828 (WKGEESHSREPS). A compositionally biased stretch (polar residues) spans 1005–1023 (VSLVSDKNVPSHSQKNRIV). A compositionally biased stretch (basic and acidic residues) spans 1045-1056 (ARERLSEKRRTV). Polar residues predominate over residues 1129 to 1150 (RSSNAQKVQQALTRSNSLSTPR). A compositionally biased stretch (low complexity) spans 1176–1193 (SNISPGTSSANSSSAKSS). Residues 1216–1227 (NVPSDSETTSSV) show a composition bias toward polar residues. Composition is skewed to low complexity over residues 1261-1280 (TQKQTPRPRSSSVKYSSSST), 1312-1328 (ASTATQTSRSSSVSRRQ), and 1381-1398 (DGDSQSSSGTGQSTSISS). The span at 1564–1596 (PSSNKKTSSTILTSNPLSRTTNNSAARTESQTP) shows a compositional bias: polar residues. The span at 1606–1618 (SSSSSSRSPGSSF) shows a compositional bias: low complexity.

Belongs to the CEP170 family.

It is found in the cytoplasm. Its subcellular location is the cytoskeleton. Functionally, plays a role in microtubule organization. In Xenopus tropicalis (Western clawed frog), this protein is Centrosomal protein of 170 kDa protein B (cep170b).